Here is a 137-residue protein sequence, read N- to C-terminus: Probable leaf thionin (137 aa).

The N-terminal stretch at 1 to 28 (MATNKSIKSVVICVLILGLVLEQVQVEG) is a signal peptide. Cystine bridges form between Cys31–Cys68, Cys32–Cys60, Cys40–Cys58, and Cys44–Cys54. The propeptide at 75 to 137 (LNLLPESGEP…DGDVIQSVEA (63 aa)) is acidic domain.

It belongs to the plant thionin (TC 1.C.44) family. 4 C-C subfamily.

The protein resides in the secreted. Functionally, thionins are small plant proteins which are toxic to animal cells. They seem to exert their toxic effect at the level of the cell membrane. Their precise function is not known. This is Probable leaf thionin from Hordeum vulgare (Barley).